Consider the following 326-residue polypeptide: MATLFDLPDLVLLEIFSYLPVRDRIRISRVCHRWKRLVDDRWLWRHVDLTLYTMRPKVMWHLLRRYMASRLYSLRMGGYLFSGSQAPQLSPALMRALGQKCPNLKRLCLHVADLSMVPITSLPSTLRTLELHSCEISMIWLQKEQDPTVLPLLECIVLDRVPAFRDEHLQGLTRFRALRSLVLGGTYRVTETGLDASLQELSYLQRLEVLGCTLSADSTLLAISRHLRDVRKIRLTVGGLSAQGLVFLEGMPVLESLCFQGPLITPDMPTPTQIVSSCLTMPKLRVLEVQGLGWEGQEAEKILCKGLPHCIVIVRACPKESMDWWM.

Residues 1 to 47 (MATLFDLPDLVLLEIFSYLPVRDRIRISRVCHRWKRLVDDRWLWRHV) enclose the F-box domain. 8 LRR repeats span residues 51–78 (LYTM…RMGG), 86–111 (APQL…CLHV), 113–133 (DLSM…ELHS), 161–185 (VPAF…VLGG), 186–211 (TYRV…EVLG), 212–236 (CTLS…IRLT), 237–261 (VGGL…CFQG), and 266–291 (PDMP…EVQG).

As to quaternary structure, interacts with SKP1 and CUL1.

It participates in protein modification; protein ubiquitination. In terms of biological role, substrate-recognition component of the SCF (SKP1-CUL1-F-box protein)-type E3 ubiquitin ligase complex. Mediates the polyubiquitination and proteasomal degradation of CAMK1 leading to disruption of cyclin D1/CDK4 complex assembly which results in G1 cell cycle arrest in lung epithelia. This is F-box/LRR-repeat protein 12 (Fbxl12) from Mus musculus (Mouse).